Reading from the N-terminus, the 116-residue chain is UPF0482 protein ECA2253 (116 aa).

Residues 1 to 31 form the signal peptide; it reads MNHYSFSSLIRALIPLSLVIVSAVWQPAALA.

It belongs to the UPF0482 family.

The sequence is that of UPF0482 protein ECA2253 from Pectobacterium atrosepticum (strain SCRI 1043 / ATCC BAA-672) (Erwinia carotovora subsp. atroseptica).